The primary structure comprises 421 residues: C2H2 type master regulator of conidiophore development brlA (421 aa).

Residues 228 to 242 (THSPTTPLRSCSIGT) show a composition bias toward polar residues. The disordered stretch occupies residues 228–247 (THSPTTPLRSCSIGTASGPD). 2 consecutive C2H2-type zinc fingers follow at residues 309 to 333 (FKCK…MKSH) and 339 to 364 (HVCW…TKTH). The span at 361–370 (TKTHSKRGGR) shows a compositional bias: basic residues. Residues 361-421 (TKTHSKRGGR…REYSVDGLDD (61 aa)) are disordered.

It is found in the nucleus. Functionally, brlA, abaA and wetA are pivotal regulators of conidiophore development and conidium maturation. They act individually and together to regulate their own expression and that of numerous other sporulation-specific genes. Binds promoters of target genes at brlA response elements (BREs) containing the conserved sequence 5'-(C/A)(A/G)AGGG(G/A)-3'. This chain is C2H2 type master regulator of conidiophore development brlA, found in Aspergillus parasiticus (strain ATCC 56775 / NRRL 5862 / SRRC 143 / SU-1).